A 560-amino-acid chain; its full sequence is Kinesin light chain 1 (560 aa).

A coiled-coil region spans residues 27–156 (KTKQVIQGLE…HLEFMNQLKK (130 aa)). The span at 156–176 (KYDDDISPSEDKDSDSSKEPL) shows a compositional bias: basic and acidic residues. The interval 156–203 (KYDDDISPSEDKDSDSSKEPLDDLFPNDEDDPGQGIQQQHSSAAAAAQ) is disordered. Position 162 is a phosphoserine (serine 162). The span at 188–203 (GQGIQQQHSSAAAAAQ) shows a compositional bias: low complexity. TPR repeat units follow at residues 213-246 (LRTL…LEKT), 255-288 (ATML…REKT), 297-330 (AATL…REKV), 339-372 (AKQL…YQTK), and 381-414 (AKTK…AHER). Position 449 is a phosphotyrosine (tyrosine 449). Serine 460 bears the Phosphoserine mark. The TPR 6 repeat unit spans residues 464–497 (TTTLKNLGALYRRQGKFEAAETLEEAALRSRKQG). 2 positions are modified to phosphoserine: serine 521 and serine 524.

This sequence belongs to the kinesin light chain family. As to quaternary structure, oligomeric complex composed of two heavy chains and two light chains. Interacts with SPAG9. Interacts with ATCAY; may link mitochondria to KLC1 and regulate mitochondria localization into neuron projections. Interacts (via TPR repeats) with TOR1A; the interaction associates TOR1A with the kinesin oligomeric complex. Interacts with BORCS5. Interacts with MAPK8IP3/JIP3 and NTRK2/TRKB; interaction with NTRK2/TRKB is mediated by MAPK8IP3/JIP3. Interacts with CLSTN1; phosphorylation at Ser-460 inhibits interaction with CLSTN1. In terms of processing, phosphorylation at Ser-460 by ERK inhibits interaction with CLSTN1 and localization to cytoplasmic vesicles. Expressed in brain (at protein level).

It is found in the cell projection. The protein resides in the growth cone. It localises to the cytoplasmic vesicle. Its subcellular location is the cytoplasm. The protein localises to the cytoskeleton. In terms of biological role, kinesin is a microtubule-associated force-producing protein that may play a role in organelle transport. The light chain may function in coupling of cargo to the heavy chain or in the modulation of its ATPase activity. This Rattus norvegicus (Rat) protein is Kinesin light chain 1 (Klc1).